Reading from the N-terminus, the 152-residue chain is Avidin (152 aa).

The signal sequence occupies residues 1–24 (MVHATSPLLLLLLLSLALVAPGLS). Positions 26–149 (RKCSLTGKWT…GINIFTRLRT (124 aa)) constitute an Avidin-like domain. Cysteines 28 and 107 form a disulfide. The N-linked (GlcNAc...) asparagine glycan is linked to N41. Biotin is bound at residue Y57.

It belongs to the avidin/streptavidin family. In terms of assembly, homotetramer. Post-translationally, N-linked glycan at Asn-41 consists of GlcNAc(beta1-2)Man(alpha1-3)[GlcNAc(beta1-4)][Man(alpha1-?)Man(alpha1-6)] Man(beta1-4)GlcNAc(beta1-4)GlcNAc. As to expression, synthesized in hen oviduct and concentrated in egg white (where it represents 0.05% of the total protein).

The protein resides in the secreted. In terms of biological role, the biological function of avidin is not known. Forms a strong non-covalent specific complex with biotin (one molecule of biotin per subunit of avidin). In Gallus gallus (Chicken), this protein is Avidin (AVD).